Consider the following 277-residue polypeptide: Alpha carbonic anhydrase 5 (277 aa).

Residues methionine 1 to serine 22 form the signal peptide. In terms of domain architecture, Alpha-carbonic anhydrase spans threonine 33–isoleucine 269. A disulfide bridge links cysteine 58 with cysteine 219. Asparagine 91 is a glycosylation site (N-linked (GlcNAc...) asparagine). Residue histidine 99 is the Proton acceptor of the active site. The N-linked (GlcNAc...) asparagine glycan is linked to asparagine 117. Residues histidine 127, histidine 129, and histidine 146 each contribute to the Zn(2+) site. Threonine 215–threonine 216 contributes to the substrate binding site.

This sequence belongs to the alpha-class carbonic anhydrase family. Zn(2+) is required as a cofactor. Post-translationally, N-glycosylated.

It is found in the plastid. Its subcellular location is the chloroplast stroma. The enzyme catalyses hydrogencarbonate + H(+) = CO2 + H2O. Its function is as follows. Reversible hydration of carbon dioxide. In Arabidopsis thaliana (Mouse-ear cress), this protein is Alpha carbonic anhydrase 5 (ACA5).